The following is a 148-amino-acid chain: Aspartate 1-decarboxylase (148 aa).

S25 functions as the Schiff-base intermediate with substrate; via pyruvic acid in the catalytic mechanism. S25 bears the Pyruvic acid (Ser) mark. T57 is a binding site for substrate. Y58 functions as the Proton donor in the catalytic mechanism. Substrate is bound at residue 73 to 75; the sequence is GAA.

The protein belongs to the PanD family. As to quaternary structure, heterooctamer of four alpha and four beta subunits. Requires pyruvate as cofactor. Is synthesized initially as an inactive proenzyme, which is activated by self-cleavage at a specific serine bond to produce a beta-subunit with a hydroxyl group at its C-terminus and an alpha-subunit with a pyruvoyl group at its N-terminus.

It is found in the cytoplasm. The catalysed reaction is L-aspartate + H(+) = beta-alanine + CO2. It functions in the pathway cofactor biosynthesis; (R)-pantothenate biosynthesis; beta-alanine from L-aspartate: step 1/1. Catalyzes the pyruvoyl-dependent decarboxylation of aspartate to produce beta-alanine. The chain is Aspartate 1-decarboxylase from Rhodococcus erythropolis (strain PR4 / NBRC 100887).